Consider the following 422-residue polypeptide: 3-isopropylmalate dehydratase large subunit (422 aa).

[4Fe-4S] cluster is bound by residues Cys-303, Cys-363, and Cys-366.

It belongs to the aconitase/IPM isomerase family. LeuC type 2 subfamily. In terms of assembly, heterodimer of LeuC and LeuD. The cofactor is [4Fe-4S] cluster.

It catalyses the reaction (2R,3S)-3-isopropylmalate = (2S)-2-isopropylmalate. It participates in amino-acid biosynthesis; L-leucine biosynthesis; L-leucine from 3-methyl-2-oxobutanoate: step 2/4. Its function is as follows. Catalyzes the isomerization between 2-isopropylmalate and 3-isopropylmalate, via the formation of 2-isopropylmaleate. The protein is 3-isopropylmalate dehydratase large subunit of Wolinella succinogenes (strain ATCC 29543 / DSM 1740 / CCUG 13145 / JCM 31913 / LMG 7466 / NCTC 11488 / FDC 602W) (Vibrio succinogenes).